The primary structure comprises 228 residues: Urease accessory protein UreF (228 aa).

It belongs to the UreF family. As to quaternary structure, ureD, UreF and UreG form a complex that acts as a GTP-hydrolysis-dependent molecular chaperone, activating the urease apoprotein by helping to assemble the nickel containing metallocenter of UreC. The UreE protein probably delivers the nickel.

It localises to the cytoplasm. Required for maturation of urease via the functional incorporation of the urease nickel metallocenter. The chain is Urease accessory protein UreF from Prochlorococcus marinus (strain MIT 9215).